We begin with the raw amino-acid sequence, 937 residues long: Protocadherin alpha-7 (937 aa).

The signal sequence occupies residues Met-1–Gly-29. Cadherin domains are found at residues Gln-30–Phe-133, Pro-134–Phe-242, Asp-243–Leu-350, Thr-351–Phe-455, Ala-456–Leu-565, and Val-581–Ala-678. Residues Gln-30–Asn-697 lie on the Extracellular side of the membrane. Cys-96 and Cys-102 are oxidised to a cystine. N-linked (GlcNAc...) asparagine glycans are attached at residues Asn-254 and Asn-265. An N-linked (GlcNAc...) asparagine glycan is attached at Asn-548. A helical transmembrane segment spans residues Val-698 to Tyr-718. At Thr-719–Gln-937 the chain is on the cytoplasmic side. 2 disordered regions span residues Arg-755 to Tyr-795 and Ile-814 to Gln-937. PXXP repeat units follow at residues Pro-774 to Pro-777, Pro-786 to Pro-789, Pro-819 to Pro-822, Pro-860 to Pro-863, and Pro-878 to Pro-881. The 5 X 4 AA repeats of P-X-X-P stretch occupies residues Pro-774–Pro-881. Residues Ser-775 to Arg-787 are compositionally biased toward polar residues. Positions Asp-896–Lys-910 are enriched in basic and acidic residues.

As to quaternary structure, forms homodimers in trans (molecules expressed by two different cells). Forms promiscuous heterodimers in cis (at the plasma membrane of the same cell) with other protocadherins.

Its subcellular location is the cell membrane. Functionally, calcium-dependent cell-adhesion protein involved in cells self-recognition and non-self discrimination. Thereby, it is involved in the establishment and maintenance of specific neuronal connections in the brain. The protein is Protocadherin alpha-7 of Homo sapiens (Human).